The sequence spans 579 residues: V-type ATP synthase alpha chain (579 aa).

Position 238 to 245 (238 to 245 (GPFGAGKT)) interacts with ATP.

This sequence belongs to the ATPase alpha/beta chains family.

It carries out the reaction ATP + H2O + 4 H(+)(in) = ADP + phosphate + 5 H(+)(out). In terms of biological role, produces ATP from ADP in the presence of a proton gradient across the membrane. The V-type alpha chain is a catalytic subunit. This Borrelia hermsii (strain HS1 / DAH) protein is V-type ATP synthase alpha chain.